The chain runs to 142 residues: Large ribosomal subunit protein uL11 (142 aa).

The protein belongs to the universal ribosomal protein uL11 family. As to quaternary structure, part of the ribosomal stalk of the 50S ribosomal subunit. Interacts with L10 and the large rRNA to form the base of the stalk. L10 forms an elongated spine to which L12 dimers bind in a sequential fashion forming a multimeric L10(L12)X complex. In terms of processing, one or more lysine residues are methylated.

Functionally, forms part of the ribosomal stalk which helps the ribosome interact with GTP-bound translation factors. This is Large ribosomal subunit protein uL11 from Desulforudis audaxviator (strain MP104C).